A 206-amino-acid polypeptide reads, in one-letter code: Large ribosomal subunit protein uL4 (206 aa).

Residues 45-78 (QGNRAQKDREQVKHTTKKPWRQKGTGRARAGMSS) are disordered. Basic residues predominate over residues 58 to 70 (HTTKKPWRQKGTG).

It belongs to the universal ribosomal protein uL4 family. Part of the 50S ribosomal subunit.

Its function is as follows. One of the primary rRNA binding proteins, this protein initially binds near the 5'-end of the 23S rRNA. It is important during the early stages of 50S assembly. It makes multiple contacts with different domains of the 23S rRNA in the assembled 50S subunit and ribosome. In terms of biological role, forms part of the polypeptide exit tunnel. In Burkholderia ambifaria (strain MC40-6), this protein is Large ribosomal subunit protein uL4.